The sequence spans 396 residues: Pre-mycofactocin synthase (396 aa).

In terms of domain architecture, FMN hydroxy acid dehydrogenase spans 1–383 (MAEAWFETVA…SPADILVPTG (383 aa)). The FMN site is built by Ser-108, Gln-128, Thr-156, and Lys-254. His-278 functions as the Proton acceptor in the catalytic mechanism. FMN is bound by residues 309–313 (DGGIR) and 332–333 (GR).

The protein belongs to the FMN-dependent alpha-hydroxy acid dehydrogenase family. It depends on FMN as a cofactor.

It catalyses the reaction 3-amino-5-[(4-hydroxyphenyl)methyl]-4,4-dimethyl-2-pyrrolidin-2-one + O2 + H2O = pre-mycofactocin + H2O2 + NH4(+). Functionally, involved in the biosynthesis of the enzyme cofactor mycofactocin (MFT). Catalyzes the oxidative deamination of AHDP (3-amino-5-[(4-hydroxyphenyl)methyl]-4,4-dimethyl-2-pyrrolidin-2-one), forming an alpha-keto amide moiety on the resulting molecule, which is called pre-mycofactocin (PMFT). This reaction occurs via a 5-[(4-hydroxyphenyl)methyl]-3-imino-4,4-dimethylpyrrolidin-2-one intermediate, which converts to PMFT. The alpha-keto amide moiety is the redox-active center for the redox activity of mycofactocin. The polypeptide is Pre-mycofactocin synthase (mftD) (Mycobacterium tuberculosis (strain CDC 1551 / Oshkosh)).